The sequence spans 677 residues: Methionine--tRNA ligase (677 aa).

The 'HIGH' region signature appears at 15–25 (PYANGSIHLGH). 4 residues coordinate Zn(2+): cysteine 146, cysteine 149, cysteine 159, and cysteine 162. The short motif at 333 to 337 (KMSKS) is the 'KMSKS' region element. Residue lysine 336 participates in ATP binding. The tRNA-binding domain occupies 575–677 (DFAKIDLRVA…DGAKPGQQVK (103 aa)).

Belongs to the class-I aminoacyl-tRNA synthetase family. MetG type 1 subfamily. Homodimer. The cofactor is Zn(2+).

It localises to the cytoplasm. The enzyme catalyses tRNA(Met) + L-methionine + ATP = L-methionyl-tRNA(Met) + AMP + diphosphate. Is required not only for elongation of protein synthesis but also for the initiation of all mRNA translation through initiator tRNA(fMet) aminoacylation. This chain is Methionine--tRNA ligase, found in Salmonella typhi.